Consider the following 329-residue polypeptide: DNA repair protein RAD51 homolog 4 (329 aa).

Positions 1–83 (MGMLRAGLCP…ELKTSTAILS (83 aa)) are preferentially binds ssDNA. Positions 4–77 (LRAGLCPGLT…GADLYEELKT (74 aa)) are interaction with XRCC2. Residues 77–328 (TSTAILSTGI…EQSPELPGKQ (252 aa)) are interaction with RAD51C. 107–114 (GGPGSGKT) serves as a coordination point for ATP.

This sequence belongs to the RecA family. RAD51 subfamily. Part of the BCDX2 complex consisting of RAD51B, RAD51C, RAD51D and XRCC2; the complex has a ring-like structure arranged into a flat disc around a central channel. In the absence of DNA, the BCDX2 subcomplex XRCC2:RAD51D formed a multimeric ring structure; in the presence of single-stranded DNA it formed a filamentous structure with the ssDNA. Interacts with SWSAP1 and ZSWIM7; involved in homologous recombination repair. Interacts with BLM; required for stimulation of BLM activity by the BCDX2 subcomplex XRCC2:RAD51D. Highly expressed in brain followed by testis. Also expressed in heart, liver, kidney, spleen, lung and skeletal muscle.

It is found in the nucleus. Its subcellular location is the chromosome. The protein resides in the telomere. Functionally, involved in the homologous recombination repair (HRR) pathway of double-stranded DNA breaks arising during DNA replication or induced by DNA-damaging agents. Bind to single-stranded DNA (ssDNA) and has DNA-dependent ATPase activity. Part of the RAD51 paralog protein complex BCDX2 which acts in the BRCA1-BRCA2-dependent HR pathway. Upon DNA damage, BCDX2 acts downstream of BRCA2 recruitment and upstream of RAD51 recruitment. BCDX2 binds predominantly to the intersection of the four duplex arms of the Holliday junction and to junction of replication forks. The BCDX2 complex was originally reported to bind single-stranded DNA, single-stranded gaps in duplex DNA and specifically to nicks in duplex DNA. Involved in telomere maintenance. The BCDX2 subcomplex XRCC2:RAD51D can stimulate Holliday junction resolution by BLM. The protein is DNA repair protein RAD51 homolog 4 (Rad51d) of Mus musculus (Mouse).